Here is a 906-residue protein sequence, read N- to C-terminus: Protein translocase subunit SecA (906 aa).

ATP contacts are provided by residues Q86, 104-108 (GEGKT), and D499. A compositionally biased stretch (basic and acidic residues) spans 834 to 847 (KLQKNMRESREDPA). The disordered stretch occupies residues 834 to 887 (KLQKNMRESREDPAFSKYNAGSSLETDLKPVVSRVDPKDRNPDDPTSWGRVSRN). Zn(2+) contacts are provided by C890, C892, C901, and H902.

This sequence belongs to the SecA family. Monomer and homodimer. Part of the essential Sec protein translocation apparatus which comprises SecA, SecYEG and auxiliary proteins SecDF-YajC and YidC. Requires Zn(2+) as cofactor.

Its subcellular location is the cell inner membrane. It is found in the cytoplasm. The enzyme catalyses ATP + H2O + cellular proteinSide 1 = ADP + phosphate + cellular proteinSide 2.. Its function is as follows. Part of the Sec protein translocase complex. Interacts with the SecYEG preprotein conducting channel. Has a central role in coupling the hydrolysis of ATP to the transfer of proteins into and across the cell membrane, serving both as a receptor for the preprotein-SecB complex and as an ATP-driven molecular motor driving the stepwise translocation of polypeptide chains across the membrane. This Rickettsia felis (strain ATCC VR-1525 / URRWXCal2) (Rickettsia azadi) protein is Protein translocase subunit SecA.